The chain runs to 125 residues: UPF0102 protein Rpic_3463 (125 aa).

This sequence belongs to the UPF0102 family.

The protein is UPF0102 protein Rpic_3463 of Ralstonia pickettii (strain 12J).